We begin with the raw amino-acid sequence, 852 residues long: Disease resistance RPP13-like protein 4 (852 aa).

Residues 17-68 (LEEKGRTVSDYRKQLEDLQSELKYMQSFLKDAERQKRTNETLRTLVADLREL) adopt a coiled-coil conformation. ADP contacts are provided by residues R149, V161, 189-196 (GMGGLGKT), R297, and K363. The NB-ARC domain maps to 164–410 (EGDKRKIKEW…MSSLQLSYDE (247 aa)). LRR repeat units lie at residues 558–581 (CKYLRVLDISKSIFDAPLSEILDE), 585–609 (LQHLACLSLSNTHPLIQFPRSMEDL), 633–657 (FKKLLVLDMTNCGSLECFPKGIGSL), 683–706 (LTNLRKLGLSLTRGDQIEEEELDS), 763–786 (LPMLRYMSICSGNLVKMQEPFWGN), and 798–824 (LSSLSDLDMDWEVLQQSMPYLRTVTAN).

This sequence belongs to the disease resistance NB-LRR family. RPP13 subfamily. As to quaternary structure, interacts with ZED1/ZRK5. Component of a stable high-order oligomeric complex made of RKS1 and RPP13L4/ZAR1 which recruits ZED1-related kinases (e.g. uridylylated PBL2 and acetylated ZED1/ZRK5) in the presence of ATP and pathogenic bacteria type III secreted effector (T3SE) proteins (e.g. Pseudomonas syringae HopZ1a and HopF2a and Xanthomonas campestris pv. campestris (Xcc) XopAC/AvrAC) to form a wheel-like pentameric resistosome; this complex triggers immunity toward pathogenic bacteria (e.g. X.campestris and P.syringae), especially in vascular tissues. Interacts with RKS1, ZED1/ZRK5, ZRK3, ZRK6 and ZRK15.

It is found in the cell membrane. It localises to the nucleus. With respect to regulation, exhibits autoinhibition activity. Its function is as follows. CC-NB-LRR receptor-like protein required for recognition of pathogenic bacteria type III effectors (T3E) such as Pseudomonas syringae HopZ1a and HopF2a and Xanthomonas campestris pv. campestris (Xcc) XopAC/AvrAC; this recognition requires ZED1-related kinases (e.g. PBL2, ZRK3 and ZED1/ZRK5). Confers allele-specific recognition and virulence attenuation of HopZ1a. Immunity mediated by RPP13L4/ZAR1 is independent of several genes required by other resistance protein signaling pathways such as NDR1 and RAR1. Together with ZED1/ZRK5, involved in the regulation of the ambient temperature-sensitive intersection of growth and immune response in the absence of pathogens. In Arabidopsis thaliana (Mouse-ear cress), this protein is Disease resistance RPP13-like protein 4 (RPP13L4).